The chain runs to 611 residues: MGLKAAQKTLFPLRSIDDVVRLFAAELGREEPDLVLLSLVLGFVEHFLAVNRVIPTNVPELTFQPSPAPDPPGGLTYFPVADLSIIAALYARFTAQIRGAVDLSLYPREGGVSSRELVKKVSDVIWNSLSRSYFKDRAHIQSLFSFITGTKLDSSGVAFAVVGACQALGLRDVHLALSEDHAWVVFGPNGEQTAEVTWHGKGNEDRRGQTVNAGVAERSWLYLKGSYMRCDRKMEVAFMVCAINPSIDLHTDSLELLQLQQKLLWLLYDLGHLERYPMALGNLADLEELEPTPGRPDPLTLYHKGIASAKTYYQDEHIYPYMYLAGYHCRNRNVREALQAWADTATVIQDYNYCREDEEIYKEFFEVANDVIPNLLKEAASLLETGEERTGEQAQGTQGQGSALQDPECFAHLLRFYDGICKWEEGSPTPVLHVGWATFLVQSLGRFEGQVRQKVHIVSREAEAAEAEEPWGDEAREGRRRGPRRESKPEEPPPPKKPALDKGPGSGQSAGSGPPRKTSGTVPGTTRGGQEVGNAAQAPAPAASPPPEGPVLTFQSEKMKGMKELLVATKINSSAIKLQLTAQSQVQMKKQKVSTPSDYTLSFLKRQRKGL.

The tract at residues 214-390 is interaction with FANCD2; it reads GVAERSWLYL…SLLETGEERT (177 aa). Residues 460 to 553 form a disordered region; sequence REAEAAEAEE…SPPPEGPVLT (94 aa). The segment covering 484–500 has biased composition (basic and acidic residues); that stretch reads RRESKPEEPPPPKKPAL. A phosphoserine mark is found at serine 487 and serine 544. Threonine 595 is subject to Phosphothreonine.

As to quaternary structure, component of the MLL-HCF complex, at least composed of KMT2A/MLL1, MEN1, ASH2L, RBBP5, DPY30, WDR5, HCFC1 and HCFC2. Component of the menin-associated histone methyltransferase complex, at least composed of KMT2B/MLL4, MEN1, ASH2L, RBBP5, DPY30 and WDR5. Interacts with POLR2B. Interacts with POLR2A phosphorylated at 'Ser-5', but not with the unphosphorylated, nor 'Ser-2' phosphorylated POLR2A forms. Interacts with FANCD2 and DBF4. Interacts with SMAD3, but not with SMAD2, nor SMAD4. Directly interacts with NFKB1, NFKB2 and RELA. Interacts with JUND (via MBM motif); inhibits the interaction of JUND with MAPK10 and the phosphorylation of JUND by MAP kinases MAPK8 and MAPK10. Interacts with KMT2A (via MBM motif). The KMT2A-MEN1 complex interacts with PSIP1 with a greater affinity as MEN1 enhances interaction of KMT2A with PSIP1. As to expression, widely expressed, with high levels in hippocampus, cerebral cortex, testis and thymus (at protein level). Also expressed at high levels in pancreatic islets, ovary and bone marrow. In the brain, highest expression in hippocampus pyramidal nerve cells (at protein level). In the testis, may be expressed in spermatogonia (at protein level). Low expression, if any, in skeletal muscle.

It localises to the nucleus. Essential component of a MLL/SET1 histone methyltransferase (HMT) complex, a complex that specifically methylates 'Lys-4' of histone H3 (H3K4). Functions as a transcriptional regulator. Binds to the TERT promoter and represses telomerase expression. Plays a role in TGFB1-mediated inhibition of cell-proliferation, possibly regulating SMAD3 transcriptional activity. Represses JUND-mediated transcriptional activation on AP1 sites, as well as that mediated by NFKB subunit RELA. Positively regulates HOXC8 and HOXC6 gene expression. May be involved in normal hematopoiesis through the activation of HOXA9 expression. May be involved in DNA repair. In Mus musculus (Mouse), this protein is Menin (Men1).